A 432-amino-acid chain; its full sequence is Benzoyl-CoA reductase subunit B (432 aa).

The protein belongs to the FldB/FldC dehydratase alpha/beta subunit family. Heterotetramer composed of A, B, C, and D subunits. The cofactor is iron-sulfur cluster. An oxidized flavin is required as a cofactor.

The catalysed reaction is cyclohexa-1,5-diene-1-carbonyl-CoA + oxidized 2[4Fe-4S]-[ferredoxin] + 2 ADP + 2 phosphate = reduced 2[4Fe-4S]-[ferredoxin] + benzoyl-CoA + 2 ATP + 2 H2O. It carries out the reaction 3-hydroxybenzoyl-CoA + AH2 + 2 ATP + 2 H2O = 3-hydroxycyclohexa-1,5-diene-1-carbonyl-CoA + A + 2 ADP + 2 phosphate + 2 H(+). Functionally, catalyzes the anaerobic reduction of benzoyl-CoA and 3-hydroxybenzoyl-CoA to form cyclohexa-1,5-diene-1-carbonyl-CoA and 3-hydroxycyclohexa-1,5-diene-1-carbonyl-CoA, respectively. The enzyme also reduces other benzoyl-CoA analogs with small substituents at the aromatic ring. In Thauera aromatica, this protein is Benzoyl-CoA reductase subunit B (bcrB).